The following is a 483-amino-acid chain: Serine hydroxymethyltransferase, cytosolic (483 aa).

Residue lysine 257 is modified to N6-(pyridoxal phosphate)lysine.

The protein belongs to the SHMT family. Homotetramer. Identified in complex with ABRAXAS2 and the other subunits of the BRISC complex, at least composed of ABRAXAS2, BRCC3/BRCC36, BABAM2 and BABAM1/NBA1. Pyridoxal 5'-phosphate serves as cofactor.

The protein resides in the cytoplasm. The catalysed reaction is (6R)-5,10-methylene-5,6,7,8-tetrahydrofolate + glycine + H2O = (6S)-5,6,7,8-tetrahydrofolate + L-serine. The protein operates within one-carbon metabolism; tetrahydrofolate interconversion. In terms of biological role, interconversion of serine and glycine. In Pongo abelii (Sumatran orangutan), this protein is Serine hydroxymethyltransferase, cytosolic (SHMT1).